A 500-amino-acid chain; its full sequence is Nitrate/nitrite transporter NrtP (500 aa).

Transmembrane regions (helical) follow at residues 19-39 (WFAFFLTFVCWFNFAPFATTI), 52-72 (TLGICNLALTIPARLIIGMLL), 79-99 (ITYSILLMFAVVPCLATALAQ), 109-129 (LLMGIVGSGFVVGIRMVAEWF), 147-167 (FGAFGAEFALPILAISTSFFS), 175-195 (LAIALVGIITAIYGVIYYNTV), 220-240 (SFWAMMISNFGLIFALGLLAW), 247-267 (IHFLTLSQMYLTWLVLAGLFA), 364-384 (WTMTIISVGIGVSYLMAHFIN), 389-409 (IPVAIAVTMFAAYFAQAGCGA), 425-445 (IAGNVGAYGNFGGVVYLTIFS), and 451-471 (TLFSTMGIAALICAFMCAFFL).

Belongs to the major facilitator superfamily. Nitrate/nitrite porter (TC 2.A.1.8) family.

The protein localises to the cell inner membrane. Transport system for both nitrate and nitrite, with much higher affinity for nitrate than for nitrite. The chain is Nitrate/nitrite transporter NrtP from Nostoc punctiforme (strain ATCC 29133 / PCC 73102).